The following is a 161-amino-acid chain: RuBisCO chaperone RbcX (161 aa).

2 disordered regions span residues 1 to 20 (MQFMGTASRMASTQRAKPME) and 130 to 161 (LGAEPSLPETEVSDRPSDSATPDDASNASHAD). Over residues 147-161 (DSATPDDASNASHAD) the composition is skewed to polar residues.

The protein belongs to the RbcX family. Homodimer. Interacts with the exposed C-terminal peptide of endogenous RbcL ('Lys-460-Asp-470') via its central cleft, as well as C-terminal peptides from other cyanobacterial RbcL. Contacts a second RbcL monomer via its peripheral polar surface.

Its subcellular location is the carboxysome. It is found in the cytoplasm. An RbcL-specific chaperone. The central cleft of the RbcX homodimer (RbcX2) binds the C-terminus of an RbcL monomer, stabilizing the C-terminus and probably preventing its reassociation with chaperonin GroEL-ES. At the same time the peripheral region of RbcX2 binds a second RbcL monomer, bridging the RbcL homodimers in the correct orientation. The RbcX2(2)-bound RbcL dimers then assemble into the RbcL8 core (RbcL8-(RbcX2)8). RbcS binding triggers the release of RbcX2. This Synechococcus sp. (strain ATCC 27144 / PCC 6301 / SAUG 1402/1) (Anacystis nidulans) protein is RuBisCO chaperone RbcX.